The sequence spans 466 residues: Asparagine--tRNA ligase (466 aa).

The protein belongs to the class-II aminoacyl-tRNA synthetase family. As to quaternary structure, homodimer.

The protein localises to the cytoplasm. It carries out the reaction tRNA(Asn) + L-asparagine + ATP = L-asparaginyl-tRNA(Asn) + AMP + diphosphate + H(+). This Wigglesworthia glossinidia brevipalpis protein is Asparagine--tRNA ligase.